The primary structure comprises 480 residues: Siroheme synthase (480 aa).

A precorrin-2 dehydrogenase /sirohydrochlorin ferrochelatase region spans residues 1 to 203; the sequence is MNYFPIFANL…QQTAQAEQEL (203 aa). NAD(+) is bound by residues 22 to 23 and 43 to 44; these read SV and NQ. The residue at position 128 (S128) is a Phosphoserine. Residues 214 to 480 are uroporphyrinogen-III C-methyltransferase; sequence GFVSLVGAGP…GGLNAGQRAA (267 aa). P223 contributes to the S-adenosyl-L-methionine binding site. D246 acts as the Proton acceptor in catalysis. The Proton donor role is filled by K268. S-adenosyl-L-methionine contacts are provided by residues 299 to 301, V304, 329 to 330, M381, and G410; these read GGD and TA.

This sequence in the N-terminal section; belongs to the precorrin-2 dehydrogenase / sirohydrochlorin ferrochelatase family. The protein in the C-terminal section; belongs to the precorrin methyltransferase family.

It carries out the reaction uroporphyrinogen III + 2 S-adenosyl-L-methionine = precorrin-2 + 2 S-adenosyl-L-homocysteine + H(+). The enzyme catalyses precorrin-2 + NAD(+) = sirohydrochlorin + NADH + 2 H(+). It catalyses the reaction siroheme + 2 H(+) = sirohydrochlorin + Fe(2+). The protein operates within cofactor biosynthesis; adenosylcobalamin biosynthesis; precorrin-2 from uroporphyrinogen III: step 1/1. It participates in cofactor biosynthesis; adenosylcobalamin biosynthesis; sirohydrochlorin from precorrin-2: step 1/1. It functions in the pathway porphyrin-containing compound metabolism; siroheme biosynthesis; precorrin-2 from uroporphyrinogen III: step 1/1. Its pathway is porphyrin-containing compound metabolism; siroheme biosynthesis; siroheme from sirohydrochlorin: step 1/1. The protein operates within porphyrin-containing compound metabolism; siroheme biosynthesis; sirohydrochlorin from precorrin-2: step 1/1. Functionally, multifunctional enzyme that catalyzes the SAM-dependent methylations of uroporphyrinogen III at position C-2 and C-7 to form precorrin-2 via precorrin-1. Then it catalyzes the NAD-dependent ring dehydrogenation of precorrin-2 to yield sirohydrochlorin. Finally, it catalyzes the ferrochelation of sirohydrochlorin to yield siroheme. In Neisseria meningitidis serogroup C (strain 053442), this protein is Siroheme synthase.